We begin with the raw amino-acid sequence, 717 residues long: Ribosomal RNA large subunit methyltransferase K/L (717 aa).

The THUMP domain occupies 45–142 (GAYRICLGSR…DKRSGVQTVQ (98 aa)).

It belongs to the methyltransferase superfamily. RlmKL family.

It localises to the cytoplasm. It carries out the reaction guanosine(2445) in 23S rRNA + S-adenosyl-L-methionine = N(2)-methylguanosine(2445) in 23S rRNA + S-adenosyl-L-homocysteine + H(+). The catalysed reaction is guanosine(2069) in 23S rRNA + S-adenosyl-L-methionine = N(2)-methylguanosine(2069) in 23S rRNA + S-adenosyl-L-homocysteine + H(+). Functionally, specifically methylates the guanine in position 2445 (m2G2445) and the guanine in position 2069 (m7G2069) of 23S rRNA. This chain is Ribosomal RNA large subunit methyltransferase K/L, found in Hahella chejuensis (strain KCTC 2396).